Here is a 154-residue protein sequence, read N- to C-terminus: Cyclin-dependent protein kinase inhibitor SMR11 (154 aa).

A disordered region spans residues 1–44; it reads MEQEEPCEAKETASSSIEPKTPNPNVPDSIPAIDSDSSLSEEEI. Residues 27-38 show a composition bias toward low complexity; that stretch reads PDSIPAIDSDSS.

Interacts with CYCB2-4.

Its function is as follows. Probable cyclin-dependent protein kinase (CDK) inhibitor that functions as a repressor of mitosis in the endoreduplication cell cycle. The polypeptide is Cyclin-dependent protein kinase inhibitor SMR11 (Arabidopsis thaliana (Mouse-ear cress)).